The chain runs to 325 residues: Odorant receptor 131-2 (325 aa).

Topologically, residues 1–22 are extracellular; sequence MNSTSNSSLGNTFISKTLKEKS. Asparagine 2 and asparagine 6 each carry an N-linked (GlcNAc...) asparagine glycan. The helical transmembrane segment at 23–43 threads the bilayer; it reads LTVQVLVGILLYVNGLMIFTF. At 44 to 54 the chain is on the cytoplasmic side; that stretch reads LKKETFRDTRY. A helical transmembrane segment spans residues 55–75; the sequence is ILFAQTLFVDSALMLFADLTL. The Extracellular portion of the chain corresponds to 76–91; the sequence is VGSAYELFIHIISCYI. An intrachain disulfide couples cysteine 89 to cysteine 170. Residues 92–112 traverse the membrane as a helical segment; the sequence is FCTVMALLSICSPVTLVAMCL. Over 113–135 the chain is Cytoplasmic; the sequence is ERYVAICLPLRHASISSPKNTIN. Residues 136–156 form a helical membrane-spanning segment; the sequence is GLLIIWGVSSVIPLFIFIVSF. The Extracellular segment spans residues 157–190; the sequence is TYTPPNAMNSYVVCSNDVMFQVKWLAEMRALSQQ. The chain crosses the membrane as a helical span at residues 191–211; it reads LLFVIMLCIVGSTYIKIMVAA. At 212-227 the chain is on the cytoplasmic side; sequence KSASAENKKSTYKGLR. A helical membrane pass occupies residues 228 to 248; sequence TVILHGLQLILGMMQLITPYI. Over 249 to 267 the chain is Extracellular; it reads DILTLKVDIMLFINVKFSN. Residues 268-285 traverse the membrane as a helical segment; that stretch reads FMLFWIFPRCLSPLVYGL. Residues 286-325 are Cytoplasmic-facing; it reads RDKKFYNALKYYAFCGIYVCKKHKIKDSKTIRGAVSIAIY.

It belongs to the G-protein coupled receptor 1 family. As to quaternary structure, homodimer. Monomer.

The protein resides in the cell membrane. Its subcellular location is the cytoplasm. Its function is as follows. Probable olfactory receptor. This chain is Odorant receptor 131-2, found in Danio rerio (Zebrafish).